A 379-amino-acid chain; its full sequence is Alanine racemase (379 aa).

Lysine 37 (proton acceptor; specific for D-alanine) is an active-site residue. N6-(pyridoxal phosphate)lysine is present on lysine 37. Arginine 137 is a substrate binding site. Tyrosine 269 (proton acceptor; specific for L-alanine) is an active-site residue. Residue methionine 317 participates in substrate binding.

It belongs to the alanine racemase family. The cofactor is pyridoxal 5'-phosphate.

It catalyses the reaction L-alanine = D-alanine. The protein operates within amino-acid biosynthesis; D-alanine biosynthesis; D-alanine from L-alanine: step 1/1. In terms of biological role, catalyzes the interconversion of L-alanine and D-alanine. May also act on other amino acids. The sequence is that of Alanine racemase (alr) from Citrifermentans bemidjiense (strain ATCC BAA-1014 / DSM 16622 / JCM 12645 / Bem) (Geobacter bemidjiensis).